We begin with the raw amino-acid sequence, 171 residues long: Large ribosomal subunit protein uL10 (171 aa).

The protein belongs to the universal ribosomal protein uL10 family. In terms of assembly, part of the ribosomal stalk of the 50S ribosomal subunit. The N-terminus interacts with L11 and the large rRNA to form the base of the stalk. The C-terminus forms an elongated spine to which L12 dimers bind in a sequential fashion forming a multimeric L10(L12)X complex.

Its function is as follows. Forms part of the ribosomal stalk, playing a central role in the interaction of the ribosome with GTP-bound translation factors. This Phenylobacterium zucineum (strain HLK1) protein is Large ribosomal subunit protein uL10.